Here is a 354-residue protein sequence, read N- to C-terminus: MGSSIDAETHEVDIKDQAQLWNIIYGYADSLVLRCTVEIGIADIIKNNNGSITLSELVSKLPLSNVNSDNLYRLLRYLVHLNILGQQTCAAGVDRVYSLKPVGTLLLKDSERSMAPVILGLSQKDFLFVWNFVKEGLGTGSTTAFEKAMGMDMWKYLEVNPNQSQLFDEGQAGETRLLTKTLLVDCRDTFQGMDSLVDVGGGNGTTIKAIHEAFPHIKCTLYDLPHVIANSDDHPNILKVPGDMFMSVPSAQVLLLKCVLHDWTDEHCVNILKKCKEAIPKETGKVIIVDVALEEESEHELTKARLILDIDMLVNTGGRERTAEDWENLLKRAGFRSHKIRPIRAIQSVIEAFP.

Asp-223 serves as a coordination point for S-adenosyl-L-methionine. His-261 (proton acceptor) is an active-site residue.

This sequence belongs to the class I-like SAM-binding methyltransferase superfamily. Cation-independent O-methyltransferase family. COMT subfamily. Expressed in roots, stems, leaves and flowers. Restricted to sieve elements of the phloem adjacent or proximal to laticifers.

The enzyme catalyses (S)-3'-hydroxy-N-methylcoclaurine + S-adenosyl-L-methionine = (S)-reticuline + S-adenosyl-L-homocysteine + H(+). Its pathway is alkaloid biosynthesis; (S)-reticuline biosynthesis; (S)-reticuline from (S)-norcoclaurine: step 4/4. In terms of biological role, involved in the biosynthesis of benzylisoquinoline alkaloids. Catalyzes the transfer of the methyl group to the 4'-hydroxyl group of 3'-hydroxy-N-methylcoclaurine to form reticuline. Also involved in the papaverine biosynthesis. In Papaver somniferum (Opium poppy), this protein is 3'-hydroxy-N-methyl-(S)-coclaurine 4'-O-methyltransferase 1.